Here is a 308-residue protein sequence, read N- to C-terminus: Glutaminase (308 aa).

Residues S65, N116, E161, N168, Y192, Y244, and V262 each contribute to the substrate site.

Belongs to the glutaminase family. As to quaternary structure, homotetramer.

The enzyme catalyses L-glutamine + H2O = L-glutamate + NH4(+). This chain is Glutaminase, found in Geobacillus kaustophilus (strain HTA426).